Here is a 146-residue protein sequence, read N- to C-terminus: 3-hydroxyacyl-[acyl-carrier-protein] dehydratase FabZ (146 aa).

Residue His48 is part of the active site.

This sequence belongs to the thioester dehydratase family. FabZ subfamily.

It localises to the cytoplasm. The catalysed reaction is a (3R)-hydroxyacyl-[ACP] = a (2E)-enoyl-[ACP] + H2O. Functionally, involved in unsaturated fatty acids biosynthesis. Catalyzes the dehydration of short chain beta-hydroxyacyl-ACPs and long chain saturated and unsaturated beta-hydroxyacyl-ACPs. The sequence is that of 3-hydroxyacyl-[acyl-carrier-protein] dehydratase FabZ from Campylobacter jejuni subsp. jejuni serotype O:6 (strain 81116 / NCTC 11828).